Consider the following 506-residue polypeptide: Ecdysteroid UDP-glucosyltransferase (506 aa).

The first 18 residues, 1–18, serve as a signal peptide directing secretion; sequence MTAYLIVFCLCCWSAARS.

It belongs to the UDP-glycosyltransferase family.

Its function is as follows. Catalyzes the transfer of glucose from UDP-glucose to ecdysteroids which are insect molting hormones. Expression of egt interferes with normal insect development and block molting. The polypeptide is Ecdysteroid UDP-glucosyltransferase (EGT) (Lymantria dispar multicapsid nuclear polyhedrosis virus (LdMNPV)).